Here is a 60-residue protein sequence, read N- to C-terminus: Large ribosomal subunit protein uL30 (60 aa).

It belongs to the universal ribosomal protein uL30 family. In terms of assembly, part of the 50S ribosomal subunit.

The sequence is that of Large ribosomal subunit protein uL30 from Christiangramia forsetii (strain DSM 17595 / CGMCC 1.15422 / KT0803) (Gramella forsetii).